Reading from the N-terminus, the 380-residue chain is Protein-tyrosine sulfotransferase A (380 aa).

Topologically, residues 1–6 (MRKNRE) are cytoplasmic. Residues 7-27 (LLLVLFLVVFILFYFITARTA) form a helical; Signal-anchor for type II membrane protein membrane-spanning segment. Topologically, residues 28 to 380 (DDPYYSNHRE…PIVDNEVSKL (353 aa)) are lumenal. The N-linked (GlcNAc...) asparagine glycan is linked to Asn66. 79–83 (RSGTT) provides a ligand contact to 3'-phosphoadenylyl sulfate. Cys97 and Cys157 are joined by a disulfide. Catalysis depends on Glu100, which acts as the Proton donor/acceptor. Residues 102–106 (RVIPR) are interaction with peptide substrate. Residues Arg184, Ser192, and Arg196 each contribute to the 3'-phosphoadenylyl sulfate site. An intrachain disulfide couples Cys226 to Cys234. Residues Tyr239, 284 to 293 (SSDQVVKPVN), and Lys299 each bind 3'-phosphoadenylyl sulfate.

It belongs to the protein sulfotransferase family.

It is found in the golgi apparatus membrane. The enzyme catalyses L-tyrosyl-[protein] + 3'-phosphoadenylyl sulfate = O-sulfo-L-tyrosine-[protein] + adenosine 3',5'-bisphosphate + H(+). In terms of biological role, catalyzes the O-sulfation of tyrosine residues within acidic motifs of polypeptides, using 3'-phosphoadenylyl sulfate (PAPS) as cosubstrate. This Caenorhabditis elegans protein is Protein-tyrosine sulfotransferase A (tpst-1).